A 335-amino-acid polypeptide reads, in one-letter code: Ferredoxin--NADP reductase (335 aa).

Positions 34, 42, 47, 87, 121, 287, and 328 each coordinate FAD.

The protein belongs to the ferredoxin--NADP reductase type 2 family. As to quaternary structure, homodimer. FAD serves as cofactor.

It catalyses the reaction 2 reduced [2Fe-2S]-[ferredoxin] + NADP(+) + H(+) = 2 oxidized [2Fe-2S]-[ferredoxin] + NADPH. The protein is Ferredoxin--NADP reductase of Rickettsia felis (strain ATCC VR-1525 / URRWXCal2) (Rickettsia azadi).